We begin with the raw amino-acid sequence, 468 residues long: MALGRCIAEGWTLERVAVKQVSWFLIYSWVCSGVCRGVSVPEQGGGGQKAGAFTCLSNSIYRIDCHWSAPELGQESRAWLLFTSNQVTEIKHKCTFWDSMCTLVLPKEEVFLPFDNFTITLHRCIMGQEQVSLVDSQYLPRRHIKLDPPSDLQSNVSSGRCVLTWGINLALEPLITSLSYELAFKRQEEAWEARHKDRIVGVTWLILEAVELNPGSIYEARLRVQMTLESYEDKTEGEYYKSHWSEWSQPVSFPSPQRRQGLLVPRWQWSASILVVVPIFLLLTGFVHLLFKLSPRLKRIFYQNIPSPEAFFHPLYSVYHGDFQSWTGARRAGPQARQNGVSTSSAGSESSIWEAVATLTYSPACPVQFACLKWEATAPGFPGLPGSEHVLPAGCLELEGQPSAYLPQEDWAPLGSARPPPPDSDSGSSDYCMLDCCEECHLSAFPGHTESPELTLAQPVALPVSSRA.

An N-terminal signal peptide occupies residues 1-37; that stretch reads MALGRCIAEGWTLERVAVKQVSWFLIYSWVCSGVCRG. Residues 38–270 lie on the Extracellular side of the membrane; it reads VSVPEQGGGG…GLLVPRWQWS (233 aa). N-linked (GlcNAc...) asparagine glycosylation is found at Asn116 and Asn155. The region spanning 148-256 is the Fibronectin type-III domain; that stretch reads PPSDLQSNVS…WSQPVSFPSP (109 aa). Positions 244–248 match the WSXWS motif motif; sequence WSEWS. The helical transmembrane segment at 271-291 threads the bilayer; the sequence is ASILVVVPIFLLLTGFVHLLF. At 292–468 the chain is on the cytoplasmic side; it reads KLSPRLKRIF…PVALPVSSRA (177 aa). The Box 1 motif signature appears at 301–309; that stretch reads FYQNIPSPE. A disordered region spans residues 407-426; that stretch reads PQEDWAPLGSARPPPPDSDS.

Belongs to the type I cytokine receptor family. Type 4 subfamily. Interacts with IL9.

It localises to the cell membrane. It is found in the secreted. Functionally, plays an important role in the immune response against parasites by acting as a receptor of IL9. The sequence is that of Interleukin-9 receptor (Il9r) from Mus musculus (Mouse).